Reading from the N-terminus, the 748-residue chain is Catalase-peroxidase (748 aa).

Positions 92–238 (WHSAGTYRTG…LAAVQMGLIY (147 aa)) form a cross-link, tryptophyl-tyrosyl-methioninium (Trp-Tyr) (with M-264). The active-site Proton acceptor is histidine 93. The segment at residues 238-264 (YVNPEGPDGNPDPLLAAKDIRDTFGRM) is a cross-link (tryptophyl-tyrosyl-methioninium (Tyr-Met) (with W-92)). Histidine 279 provides a ligand contact to heme b.

The protein belongs to the peroxidase family. Peroxidase/catalase subfamily. In terms of assembly, homodimer or homotetramer. Heme b is required as a cofactor. Formation of the three residue Trp-Tyr-Met cross-link is important for the catalase, but not the peroxidase activity of the enzyme.

It carries out the reaction H2O2 + AH2 = A + 2 H2O. The catalysed reaction is 2 H2O2 = O2 + 2 H2O. Bifunctional enzyme with both catalase and broad-spectrum peroxidase activity. This chain is Catalase-peroxidase, found in Xanthomonas campestris pv. campestris (strain 8004).